The primary structure comprises 310 residues: Leucine carboxyl methyltransferase 1 (310 aa).

S-adenosyl-L-methionine is bound by residues R50, G75, D100, D145 to I146, and E169.

It belongs to the methyltransferase superfamily. LCMT family.

It catalyses the reaction [phosphatase 2A protein]-C-terminal L-leucine + S-adenosyl-L-methionine = [phosphatase 2A protein]-C-terminal L-leucine methyl ester + S-adenosyl-L-homocysteine. Functionally, methylates the carboxyl group of the C-terminal leucine residue of protein phosphatase 2A catalytic subunits to form alpha-leucine ester residues. This is Leucine carboxyl methyltransferase 1 (ppm1) from Schizosaccharomyces pombe (strain 972 / ATCC 24843) (Fission yeast).